Here is a 260-residue protein sequence, read N- to C-terminus: GDSL esterase/lipase WDL1 (260 aa).

The N-terminal stretch at 1–35 (MLGFAPAPGRPLFVLFGSSIVQFSFSNGGWGAALA) is a signal peptide. Catalysis depends on Ser18, which acts as the Nucleophile. Residues Asn83 and Asn150 are each glycosylated (N-linked (GlcNAc...) asparagine). Residues Asp191 and His194 contribute to the active site.

This sequence belongs to the 'GDSL' lipolytic enzyme family. As to expression, highly expressed in panicles. Expressed in shoots, mature flowers and seeds.

The protein resides in the endoplasmic reticulum. Involved in the organization of leaf cuticle and wax crystals. The protein is GDSL esterase/lipase WDL1 of Oryza sativa subsp. japonica (Rice).